The sequence spans 782 residues: Potassium transporter 6 (782 aa).

At methionine 1–threonine 18 the chain is on the cytoplasmic side. A helical membrane pass occupies residues valine 19–leucine 39. The Extracellular portion of the chain corresponds to tyrosine 40–glycine 61. Residues valine 62–valine 82 form a helical membrane-spanning segment. The Cytoplasmic segment spans residues leucine 83–lysine 153. Residues isoleucine 154 to proline 174 form a helical membrane-spanning segment. At alanine 175–lysine 195 the chain is on the extracellular side. A helical transmembrane segment spans residues tyrosine 196 to glycine 216. The Cytoplasmic segment spans residues threonine 217 to arginine 219. The helical transmembrane segment at valine 220–valine 240 threads the bilayer. Residues tyrosine 241–glycine 270 lie on the Extracellular side of the membrane. A helical membrane pass occupies residues tryptophan 271–leucine 291. Residues glycine 292–glutamine 296 lie on the Cytoplasmic side of the membrane. A helical membrane pass occupies residues leucine 297 to glycine 317. The Extracellular portion of the chain corresponds to glutamine 318–proline 347. A helical transmembrane segment spans residues valine 348 to phenylalanine 368. Topologically, residues serine 369 to glutamine 395 are cytoplasmic. The chain crosses the membrane as a helical span at residues isoleucine 396–phenylalanine 416. Over arginine 417–arginine 421 the chain is Extracellular. Helical transmembrane passes span leucine 422–serine 442 and leucine 443–phenylalanine 463. Residues glycine 464–serine 474 are Extracellular-facing. The helical transmembrane segment at leucine 475–alanine 495 threads the bilayer. Over methionine 496–valine 782 the chain is Cytoplasmic. The span at tyrosine 664–glycine 675 shows a compositional bias: basic and acidic residues. The segment at tyrosine 664–lysine 693 is disordered. A compositionally biased stretch (basic residues) spans proline 682–lysine 693.

It belongs to the HAK/KUP transporter (TC 2.A.72.3) family.

It is found in the cell membrane. Functionally, probable potassium transporter. The sequence is that of Potassium transporter 6 (POT6) from Arabidopsis thaliana (Mouse-ear cress).